Reading from the N-terminus, the 358-residue chain is MEAAVGDGEGGGGGGGRGKRGRGGGGGEMVEAVWGQTGSTASRIYRVRATGGKDRHSKVYTAKGIRDRRVRLSVATAIQFYDLQDRLGFDQPSKAIEWLINAASPAIDTLPSLDPAAFAAIPHAAAADAAPTRRRSQQQQQQLSNKSGCSSTSETSKGSDKEVTVASAPAQAASFTELLIAGVAASSAGGGAIGNGADCVGIAHPGKGGAEGASTYGFSAASSFGDAPPIGMVPAPPFNFSAPGADMAAHYSLAQDQLAAPPPPAGGDYNLNFSMSSGFLGANRGTLQSNSPSNMSGHHHHHHQQQLQRLDGSTISFLLGHAAAAAHPAASEGQITSTAALQLWDGFRHSGMKEKSKN.

Residues 1-29 (MEAAVGDGEGGGGGGGRGKRGRGGGGGEM) are disordered. A compositionally biased stretch (gly residues) spans 7–16 (DGEGGGGGGG). In terms of domain architecture, TCP spans 52–110 (GKDRHSKVYTAKGIRDRRVRLSVATAIQFYDLQDRLGFDQPSKAIEWLINAASPAIDTL). Disordered regions lie at residues 127 to 163 (ADAAPTRRRSQQQQQQLSNKSGCSSTSETSKGSDKEV) and 282 to 308 (ANRGTLQSNSPSNMSGHHHHHHQQQLQ). 2 stretches are compositionally biased toward polar residues: residues 143 to 156 (LSNKSGCSSTSETS) and 285 to 296 (GTLQSNSPSNMS).

In terms of assembly, forms homodimers and heterodimers.

It localises to the nucleus. Transcription activator. Binds the promoter core sequence 5'-GGNCC-3'. The chain is Transcription factor PCF6 (PCF6) from Oryza sativa subsp. indica (Rice).